Reading from the N-terminus, the 277-residue chain is Large ribosomal subunit protein uL2 (277 aa).

Residues 222–277 are disordered; sequence GVAMNPVDHPHGGGEGRTSGGRHPVSPWGKPTKGKRTRSNKATDKFIMRTRHQRKK.

This sequence belongs to the universal ribosomal protein uL2 family. As to quaternary structure, part of the 50S ribosomal subunit. Forms a bridge to the 30S subunit in the 70S ribosome.

In terms of biological role, one of the primary rRNA binding proteins. Required for association of the 30S and 50S subunits to form the 70S ribosome, for tRNA binding and peptide bond formation. It has been suggested to have peptidyltransferase activity; this is somewhat controversial. Makes several contacts with the 16S rRNA in the 70S ribosome. This is Large ribosomal subunit protein uL2 from Bartonella henselae (strain ATCC 49882 / DSM 28221 / CCUG 30454 / Houston 1) (Rochalimaea henselae).